Here is an 858-residue protein sequence, read N- to C-terminus: M-phase phosphoprotein 8 (858 aa).

A disordered region spans residues 18–55; the sequence is VPDSIGRSPESEGVGAGDEEKDAATKGTVAVGDSEEDG. Residues Ser51, Ser85, Ser136, and Ser138 each carry the phosphoserine modification. Residues 59–118 form the Chromo domain; it reads FEVERILDMKCEGGKNLYKVRWKGYTSEDDTWEPEVHLEDCKEVLLEFRKKLAENKAKAV. A histone H3K9me3 binding region spans residues 80–87; it reads WKGYTSED. Residues 129–175 form a disordered region; it reads NDIFEADSDSDQQSDTKEDISPRKKKKKIKCKEETSPEDLRKKRTKM. Thr144 carries the phosphothreonine modification. A phosphoserine; by CDK1 mark is found at Ser149 and Ser164. Over residues 159-169 the composition is skewed to basic and acidic residues; sequence CKEETSPEDLR. A Phosphoserine modification is found at Ser188. Disordered stretches follow at residues 209 to 234 and 250 to 300; these read ELKD…NKRA and NRKT…DKTA. Residues Ser267, Ser271, and Ser278 each carry the phosphoserine modification. The span at 273 to 282 shows a compositional bias: acidic residues; the sequence is ILEDDSEDFI. Positions 283–300 are enriched in basic and acidic residues; it reads SDNREENQNVRSVRDKTA. Residue Ser318 is modified to Phosphoserine. The segment at 321–431 is disordered; the sequence is EDAGTRVRRK…YDLDKEEKAR (111 aa). Over residues 335-357 the composition is skewed to basic and acidic residues; the sequence is RKFEEPKEIKKLESTNAFLERRA. Position 385 is a phosphothreonine; by CDK1 (Thr385). Ser392 and Ser400 each carry phosphoserine. Basic and acidic residues predominate over residues 407–431; sequence EKEKKNEPKGKYQKRYDLDKEEKAR. Thr453 bears the Phosphothreonine mark. ANK repeat units lie at residues 598-627, 631-660, 664-693, and 697-726; these read TGMT…KVNG, NGTT…FVNV, NGET…DCNI, and HQNS…TLSR.

As to quaternary structure, homodimer. Interacts (via chromo domain) with histone H3K9me3. Has the highest affinity for H3K9me3, and lesser affinity for H3K9me2 and H3K9me1. Component of the HUSH complex; at least composed of TASOR, PPHLN1 and MPHOSPH8. Interacts with DNMT3, EHMT1 and SETDB1. Interacts with MORC2; the interaction associateS MORC2 with the HUSH complex which recruits MORC2 to heterochromatic loci. Interacts with ZNF638; leading to recruitment of the HUSH complex to unintegrated retroviral DNA. Interacts with TASOR. Phosphorylated in M (mitotic) phase. Phosphorylation by CDK1 promotes dissociation from chromatin. In terms of tissue distribution, expressed in the spermatogonia, spermatocytes and granular cells within the cerebellum.

It is found in the nucleus. The protein localises to the chromosome. In terms of biological role, heterochromatin component that specifically recognizes and binds methylated 'Lys-9' of histone H3 (H3K9me) and promotes recruitment of proteins that mediate epigenetic repression. Mediates recruitment of the HUSH complex to H3K9me3 sites: the HUSH complex is recruited to genomic loci rich in H3K9me3 and is required to maintain transcriptional silencing by promoting recruitment of SETDB1, a histone methyltransferase that mediates further deposition of H3K9me3, as well as MORC2. Binds H3K9me and promotes DNA methylation by recruiting DNMT3A to target CpG sites; these can be situated within the coding region of the gene. Mediates down-regulation of CDH1 expression. Also represses L1 retrotransposons in collaboration with MORC2 and, probably, SETDB1, the silencing is dependent of repressive epigenetic modifications, such as H3K9me3 mark. Silencing events often occur within introns of transcriptionally active genes, and lead to the down-regulation of host gene expression. The HUSH complex is also involved in the silencing of unintegrated retroviral DNA by being recruited by ZNF638: some part of the retroviral DNA formed immediately after infection remains unintegrated in the host genome and is transcriptionally repressed. This chain is M-phase phosphoprotein 8, found in Mus musculus (Mouse).